The following is an 81-amino-acid chain: Acyl carrier protein (81 aa).

In terms of domain architecture, Carrier spans 2-80 (ASNEEILAGL…DAVSYIASAQ (79 aa)). The residue at position 40 (S40) is an O-(pantetheine 4'-phosphoryl)serine.

Belongs to the acyl carrier protein (ACP) family. In terms of processing, 4'-phosphopantetheine is transferred from CoA to a specific serine of apo-ACP by AcpS. This modification is essential for activity because fatty acids are bound in thioester linkage to the sulfhydryl of the prosthetic group.

It localises to the cytoplasm. The protein operates within lipid metabolism; fatty acid biosynthesis. Carrier of the growing fatty acid chain in fatty acid biosynthesis. This chain is Acyl carrier protein, found in Renibacterium salmoninarum (strain ATCC 33209 / DSM 20767 / JCM 11484 / NBRC 15589 / NCIMB 2235).